Consider the following 476-residue polypeptide: Cysteine--tRNA ligase (476 aa).

C30 provides a ligand contact to Zn(2+). Residues 32–42 carry the 'HIGH' region motif; the sequence is PTVYNYIHIGN. Residues C215, H240, and E244 each coordinate Zn(2+). A 'KMSKS' region motif is present at residues 274–278; that stretch reads KMSKS. K277 contributes to the ATP binding site.

The protein belongs to the class-I aminoacyl-tRNA synthetase family. Monomer. Zn(2+) is required as a cofactor.

It localises to the cytoplasm. It catalyses the reaction tRNA(Cys) + L-cysteine + ATP = L-cysteinyl-tRNA(Cys) + AMP + diphosphate. This Lactobacillus helveticus (strain DPC 4571) protein is Cysteine--tRNA ligase.